Consider the following 417-residue polypeptide: Serine hydroxymethyltransferase (417 aa).

(6S)-5,6,7,8-tetrahydrofolate-binding positions include leucine 120 and 124 to 126; that span reads GHL. An N6-(pyridoxal phosphate)lysine modification is found at lysine 229.

This sequence belongs to the SHMT family. As to quaternary structure, homodimer. It depends on pyridoxal 5'-phosphate as a cofactor.

The protein resides in the cytoplasm. The enzyme catalyses (6R)-5,10-methylene-5,6,7,8-tetrahydrofolate + glycine + H2O = (6S)-5,6,7,8-tetrahydrofolate + L-serine. The protein operates within one-carbon metabolism; tetrahydrofolate interconversion. It participates in amino-acid biosynthesis; glycine biosynthesis; glycine from L-serine: step 1/1. Functionally, catalyzes the reversible interconversion of serine and glycine with tetrahydrofolate (THF) serving as the one-carbon carrier. This reaction serves as the major source of one-carbon groups required for the biosynthesis of purines, thymidylate, methionine, and other important biomolecules. Also exhibits THF-independent aldolase activity toward beta-hydroxyamino acids, producing glycine and aldehydes, via a retro-aldol mechanism. This chain is Serine hydroxymethyltransferase, found in Anaeromyxobacter dehalogenans (strain 2CP-1 / ATCC BAA-258).